A 221-amino-acid polypeptide reads, in one-letter code: Probable chemoreceptor glutamine deamidase CheD 1 (221 aa).

The protein belongs to the CheD family.

The enzyme catalyses L-glutaminyl-[protein] + H2O = L-glutamyl-[protein] + NH4(+). Functionally, probably deamidates glutamine residues to glutamate on methyl-accepting chemotaxis receptors (MCPs), playing an important role in chemotaxis. The protein is Probable chemoreceptor glutamine deamidase CheD 1 of Methanosarcina mazei (strain ATCC BAA-159 / DSM 3647 / Goe1 / Go1 / JCM 11833 / OCM 88) (Methanosarcina frisia).